The following is a 717-amino-acid chain: Protein E2 homolog (717 aa).

The protein belongs to the poxviridae E2 protein family.

This Fowlpox virus (strain NVSL) (FPV) protein is Protein E2 homolog.